Here is a 581-residue protein sequence, read N- to C-terminus: Tricyclene synthase Oc15, chloroplastic (581 aa).

Residues 1 to 68 (MAFCISYVGA…ALCLNEHSLS (68 aa)) constitute a chloroplast transit peptide. Residues Asn-27, Asn-206, and Asn-319 are each glycosylated (N-linked (GlcNAc...) asparagine). Residues Asp-338 and Asp-342 each contribute to the Mg(2+) site. A DDXXD motif motif is present at residues 338–342 (DDIFD). Asn-384 and Asn-465 each carry an N-linked (GlcNAc...) asparagine glycan. 3 residues coordinate Mg(2+): Asn-482, Ser-486, and Glu-490. Asn-509 carries an N-linked (GlcNAc...) asparagine glycan.

This sequence belongs to the terpene synthase family. Tpsg subfamily. Mg(2+) is required as a cofactor. Mn(2+) serves as cofactor. Accumulates in flowers; mostly expressed in both upper and lower petal lobes, and, to a lower extent, in tube and stamens.

The protein resides in the plastid. It localises to the chloroplast stroma. It carries out the reaction (2E)-geranyl diphosphate = tricyclene + diphosphate. The catalysed reaction is (2E)-geranyl diphosphate = beta-myrcene + diphosphate. It functions in the pathway secondary metabolite biosynthesis; terpenoid biosynthesis. Contributes to floral scent emission. This chain is Tricyclene synthase Oc15, chloroplastic (Oc15), found in Antirrhinum majus (Garden snapdragon).